We begin with the raw amino-acid sequence, 188 residues long: Large ribosomal subunit protein uL5 (188 aa).

Belongs to the universal ribosomal protein uL5 family. Part of the 50S ribosomal subunit; part of the 5S rRNA/L5/L18/L25 subcomplex. Contacts the 5S rRNA and the P site tRNA. Forms a bridge to the 30S subunit in the 70S ribosome.

Its function is as follows. This is one of the proteins that bind and probably mediate the attachment of the 5S RNA into the large ribosomal subunit, where it forms part of the central protuberance. In the 70S ribosome it contacts protein S13 of the 30S subunit (bridge B1b), connecting the 2 subunits; this bridge is implicated in subunit movement. Contacts the P site tRNA; the 5S rRNA and some of its associated proteins might help stabilize positioning of ribosome-bound tRNAs. The protein is Large ribosomal subunit protein uL5 of Aquifex aeolicus (strain VF5).